The following is a 55-amino-acid chain: Large ribosomal subunit protein bL33 (55 aa).

It belongs to the bacterial ribosomal protein bL33 family.

The polypeptide is Large ribosomal subunit protein bL33 (Rhodopseudomonas palustris (strain BisA53)).